The chain runs to 98 residues: NADH-ubiquinone oxidoreductase chain 4L (98 aa).

3 helical membrane-spanning segments follow: residues 1-21 (MSLI…GLLM), 29-49 (ALLC…LTIL), and 61-81 (IILL…LVMV).

It belongs to the complex I subunit 4L family. In terms of assembly, core subunit of respiratory chain NADH dehydrogenase (Complex I) which is composed of 45 different subunits.

The protein resides in the mitochondrion inner membrane. The enzyme catalyses a ubiquinone + NADH + 5 H(+)(in) = a ubiquinol + NAD(+) + 4 H(+)(out). Core subunit of the mitochondrial membrane respiratory chain NADH dehydrogenase (Complex I) which catalyzes electron transfer from NADH through the respiratory chain, using ubiquinone as an electron acceptor. Part of the enzyme membrane arm which is embedded in the lipid bilayer and involved in proton translocation. This is NADH-ubiquinone oxidoreductase chain 4L (MT-ND4L) from Phocoena phocoena (Harbor porpoise).